A 161-amino-acid polypeptide reads, in one-letter code: Cyclic pyranopterin monophosphate synthase (161 aa).

Substrate contacts are provided by residues 75–77 and 113–114; these read LCH and ME. D128 is an active-site residue.

The protein belongs to the MoaC family. In terms of assembly, homohexamer; trimer of dimers.

The catalysed reaction is (8S)-3',8-cyclo-7,8-dihydroguanosine 5'-triphosphate = cyclic pyranopterin phosphate + diphosphate. The protein operates within cofactor biosynthesis; molybdopterin biosynthesis. Its function is as follows. Catalyzes the conversion of (8S)-3',8-cyclo-7,8-dihydroguanosine 5'-triphosphate to cyclic pyranopterin monophosphate (cPMP). This chain is Cyclic pyranopterin monophosphate synthase, found in Erwinia tasmaniensis (strain DSM 17950 / CFBP 7177 / CIP 109463 / NCPPB 4357 / Et1/99).